Consider the following 178-residue polypeptide: ATP synthase subunit delta (178 aa).

It belongs to the ATPase delta chain family. In terms of assembly, F-type ATPases have 2 components, F(1) - the catalytic core - and F(0) - the membrane proton channel. F(1) has five subunits: alpha(3), beta(3), gamma(1), delta(1), epsilon(1). F(0) has three main subunits: a(1), b(2) and c(10-14). The alpha and beta chains form an alternating ring which encloses part of the gamma chain. F(1) is attached to F(0) by a central stalk formed by the gamma and epsilon chains, while a peripheral stalk is formed by the delta and b chains.

It localises to the cell inner membrane. In terms of biological role, f(1)F(0) ATP synthase produces ATP from ADP in the presence of a proton or sodium gradient. F-type ATPases consist of two structural domains, F(1) containing the extramembraneous catalytic core and F(0) containing the membrane proton channel, linked together by a central stalk and a peripheral stalk. During catalysis, ATP synthesis in the catalytic domain of F(1) is coupled via a rotary mechanism of the central stalk subunits to proton translocation. Functionally, this protein is part of the stalk that links CF(0) to CF(1). It either transmits conformational changes from CF(0) to CF(1) or is implicated in proton conduction. The sequence is that of ATP synthase subunit delta from Chromobacterium violaceum (strain ATCC 12472 / DSM 30191 / JCM 1249 / CCUG 213 / NBRC 12614 / NCIMB 9131 / NCTC 9757 / MK).